The chain runs to 481 residues: Drebrin-like protein (481 aa).

The ADF-H domain occupies 3 to 131; it reads SLDISDPDIT…DEKAITAALN (129 aa). A compositionally biased stretch (basic and acidic residues) spans 217–227; that stretch reads YWKQQQAEKQK. Residues 217–423 form a disordered region; that stretch reads YWKQQQAEKQ…PAEEQYDQSG (207 aa). The span at 228-237 shows a compositional bias: low complexity; that stretch reads QQQQQQQQQA. Positions 248–261 are enriched in polar residues; sequence TVGNKFQEQVSKPT. Over residues 291–300 the composition is skewed to pro residues; sequence PPAPSRPAAP. Positions 325-335 are enriched in acidic residues; sequence QYEEPQYEEEQ. Low complexity predominate over residues 336-413; the sequence is QQQYEEQPTE…YQEEQQQYEQ (78 aa). In terms of domain architecture, SH3 spans 422–481; it reads SGYLQAKALYDYNGENDGDLSFREGDIITILDQSDPDGWWQGSLPTGEQGFFPSNFVQQL.

This sequence belongs to the ABP1 family.

The protein localises to the cytoplasm. The protein resides in the cytoskeleton. It is found in the cell projection. It localises to the pseudopodium. Functionally, actin-binding adapter protein. Binds to F-actin but is not involved in actin polymerization, capping or bundling. Does not bind G-actin. Controls pseudopodium number and motility in early stages of chemotactic aggregation. In Dictyostelium discoideum (Social amoeba), this protein is Drebrin-like protein (abpE-1).